Here is a 386-residue protein sequence, read N- to C-terminus: MSINPAFLRRITWGSKSLHHQFTRCQVRALSSSVEQTPESTTPALSALRERLANGGPTLSDFLTRNLGEEPYSVDVGTKKNPLPKPKWMKAAVPGGDKYTAIKAKLREMNLHTVCEEAKCPNLGECWSGGETGTATATIMILGDTCTRGCRFCAVKTSRTPPPPDPNEPTNVAEAIVSWGLDYVVLTSVDRDDLPDQGSGHFAKTVQKLKQLKPKMLVEALVPDFQGNSECVQKVATSGLDVFAHNIETVEELQRVVRDHRANFNQSLEVLKMAKTYSPLGVLTKTSVMLGCGETPAQVIETMEKVREAGVDVITFGQYMRPTKRHMAVSEYVTPEAFEKYQKLGMEMGFRYVASGPMVRSSYKAGEFYIKSMIEDDRKKASSSSI.

[4Fe-4S] cluster contacts are provided by Cys-115, Cys-120, Cys-126, Cys-146, Cys-150, Cys-153, and Ser-362. The region spanning Glu-131–Arg-351 is the Radical SAM core domain.

Belongs to the radical SAM superfamily. Lipoyl synthase family. The cofactor is [4Fe-4S] cluster.

The protein localises to the mitochondrion. The catalysed reaction is [[Fe-S] cluster scaffold protein carrying a second [4Fe-4S](2+) cluster] + N(6)-octanoyl-L-lysyl-[protein] + 2 oxidized [2Fe-2S]-[ferredoxin] + 2 S-adenosyl-L-methionine + 4 H(+) = [[Fe-S] cluster scaffold protein] + N(6)-[(R)-dihydrolipoyl]-L-lysyl-[protein] + 4 Fe(3+) + 2 hydrogen sulfide + 2 5'-deoxyadenosine + 2 L-methionine + 2 reduced [2Fe-2S]-[ferredoxin]. The protein operates within protein modification; protein lipoylation via endogenous pathway; protein N(6)-(lipoyl)lysine from octanoyl-[acyl-carrier-protein]: step 2/2. Functionally, catalyzes the radical-mediated insertion of two sulfur atoms into the C-6 and C-8 positions of the octanoyl moiety bound to the lipoyl domains of lipoate-dependent enzymes, thereby converting the octanoylated domains into lipoylated derivatives. In Picea sitchensis (Sitka spruce), this protein is Lipoyl synthase, mitochondrial.